The following is a 239-amino-acid chain: Uridylate kinase (239 aa).

13–16 (KVSG) is an ATP binding site. Gly-55 lines the UMP pocket. Residues Gly-56 and Arg-60 each contribute to the ATP site. Residues Asp-75 and 136-143 (TGNPFFTT) contribute to the UMP site. ATP contacts are provided by Thr-163, Gln-164, Tyr-169, and Asp-172.

Belongs to the UMP kinase family. Homohexamer.

The protein resides in the cytoplasm. The enzyme catalyses UMP + ATP = UDP + ADP. The protein operates within pyrimidine metabolism; CTP biosynthesis via de novo pathway; UDP from UMP (UMPK route): step 1/1. With respect to regulation, inhibited by UTP. In terms of biological role, catalyzes the reversible phosphorylation of UMP to UDP. This is Uridylate kinase from Bartonella bacilliformis (strain ATCC 35685 / KC583 / Herrer 020/F12,63).